The following is a 912-amino-acid chain: Phosphatidylinositol-3-phosphatase SAC1 (912 aa).

The segment at Met1–Pro29 is disordered. Residues Leu173 to Gly575 enclose the SAC domain. A Phosphatase catalytic core motif is present at residues Arg511–Asn522. The required for subcellular localization stretch occupies residues Arg715 to Ile912. Positions Leu740–Ser766 are disordered.

As to quaternary structure, component of the PI(3,5)P2 regulatory complex at least composed of ATG18, SAC/FIG4, FAB1 and VAC14. The cofactor is Mg(2+). In terms of tissue distribution, ubiquitous with higher expression level in both young elongating and nonelongating stems. Detected in vascular tissues.

It is found in the vacuole membrane. It localises to the golgi apparatus. The catalysed reaction is a 1,2-diacyl-sn-glycero-3-phospho-(1D-myo-inositol-3-phosphate) + H2O = a 1,2-diacyl-sn-glycero-3-phospho-(1D-myo-inositol) + phosphate. It catalyses the reaction a 1,2-diacyl-sn-glycero-3-phospho-(1D-myo-inositol-3,5-bisphosphate) + H2O = a 1,2-diacyl-sn-glycero-3-phospho-(1D-myo-inositol-3-phosphate) + phosphate. It carries out the reaction a 1,2-diacyl-sn-glycero-3-phospho-(1D-myo-inositol 4-phosphate) + H2O = a 1,2-diacyl-sn-glycero-3-phospho-(1D-myo-inositol) + phosphate. Functionally, phosphoinositide phosphatase which catalyzes the hydrolysis of phosphatidylinositol-3,5-bisphosphate (PtdIns(3,5)P2). Can also catalyze the hydrolysis of phosphatidylinositol 3-phosphate (PtdIns(3)P) and phosphatidylinositol 4-phosphate (PtdIns(4)P). Required for normal cell morphogenesis, cell wall synthesis, and actin organization. This is Phosphatidylinositol-3-phosphatase SAC1 (SAC1) from Arabidopsis thaliana (Mouse-ear cress).